The chain runs to 290 residues: Phosphonopyruvate hydrolase (290 aa).

A substrate-binding site is contributed by 40–44; sequence WGSGF. The active-site Nucleophile is D54. D81 contributes to the Mg(2+) binding site. 3 residues coordinate substrate: R155, H186, and R188.

Homodimer. Homotetramer. The cofactor is Co(2+). Mg(2+) serves as cofactor. Requires Mn(2+) as cofactor.

The catalysed reaction is 3-phosphonopyruvate + H2O = pyruvate + phosphate + H(+). Its activity is regulated as follows. Partially inhibited by EDTA. Activity is restored by Co(2+), and to a lesser extent by Ni(2+) and Mg(2+). Unaffected by Cs(2+) and Ca(2+). Activity is reduced by Mn(2+) and Cu(2+). Functionally, hydrolyzes phosphonopyruvate. Not active towards phosphoenolpyruvate, glycerophosphate, phospho-L-serine or phosphoglycolic acid. This chain is Phosphonopyruvate hydrolase, found in Variovorax sp. (strain Pal2).